Reading from the N-terminus, the 455-residue chain is Golgi pH regulator (455 aa).

The next 5 helical transmembrane spans lie at 5–25 (IDSSIMVTSQILFFGFGWLFF), 46–66 (VTFAFSCTMFELIIFEILGVL), 79–99 (LCVILLILVFMVPFYIGYFIV), 114–134 (CLLWLTFMYFFWKLGDPFPIL), and 150–170 (VGVIGVTLMALLSGFGAVNCP). Asn180 and Asn243 each carry an N-linked (GlcNAc...) asparagine glycan. 4 helical membrane passes run 290 to 310 (GYFFSIYCVWKIFMATINIVL), 343 to 363 (ISFILVGIIIVSSIRGLLITL), 378 to 398 (VIVLLLAQIMGMYFVSSVLLI), and 425 to 445 (WFDVIFLVSALSSILFLYLAH).

This sequence belongs to the Golgi pH regulator (TC 1.A.38) family. As to quaternary structure, homotrimer. Interacts with RABL3; the interaction stabilizes GPR89B.

The protein resides in the golgi apparatus membrane. It carries out the reaction iodide(out) = iodide(in). The catalysed reaction is chloride(in) = chloride(out). It catalyses the reaction bromide(in) = bromide(out). The enzyme catalyses fluoride(in) = fluoride(out). In terms of biological role, voltage-gated channel that enables the transfer of anions such as iodide, chloride, bromide and fluoride which may function in counter-ion conductance and participates in Golgi acidification. Plays a role in lymphocyte development, probably by acting as a RABL3 effector in hematopoietic cells. The protein is Golgi pH regulator of Cricetulus griseus (Chinese hamster).